The following is a 66-amino-acid chain: FMRFamide-like neuropeptides 24 (66 aa).

Positions 1-22 (MSRTSIILVLAIFVAIAAIAQC) are cleaved as a signal peptide. A propeptide spanning residues 23–48 (RNIQYDVDEISPEAAFRYAQWGEIPH) is cleaved from the precursor. Phenylalanine amide is present on phenylalanine 61. The propeptide occupies 65-66 (SV).

Belongs to the FARP (FMRFamide related peptide) family.

Its subcellular location is the secreted. Functionally, FMRFamides and FMRFamide-like peptides are neuropeptides. The sequence is that of FMRFamide-like neuropeptides 24 from Caenorhabditis briggsae.